Reading from the N-terminus, the 202-residue chain is MLLGCCHLGYKMSRIEPTRFVLFRHSSTFRVHMSVLQVLTFPDDRLRTVAKPVEKVTPEIQKIVDDMIETMYDEEGIGLAATQVDIHQRIVVIDISESRNEPMVLINPEILEKRGEDGIEEGCLSVPGARALVPRAAEVTVKALDRDGHEFTLEADDLLAICIQHELDHLQGKLFVDYLSPLKRKRIQDKLAKIKRFNEKQR.

Fe cation is bound by residues C123 and H165. E166 is a catalytic residue. Residue H169 participates in Fe cation binding.

The protein belongs to the polypeptide deformylase family. Requires Fe(2+) as cofactor.

The catalysed reaction is N-terminal N-formyl-L-methionyl-[peptide] + H2O = N-terminal L-methionyl-[peptide] + formate. Removes the formyl group from the N-terminal Met of newly synthesized proteins. Requires at least a dipeptide for an efficient rate of reaction. N-terminal L-methionine is a prerequisite for activity but the enzyme has broad specificity at other positions. This is Peptide deformylase 2 from Vibrio vulnificus (strain YJ016).